We begin with the raw amino-acid sequence, 122 residues long: Large ribosomal subunit protein uL14 (122 aa).

The protein belongs to the universal ribosomal protein uL14 family. Part of the 50S ribosomal subunit. Forms a cluster with proteins L3 and L19. In the 70S ribosome, L14 and L19 interact and together make contacts with the 16S rRNA in bridges B5 and B8.

Its function is as follows. Binds to 23S rRNA. Forms part of two intersubunit bridges in the 70S ribosome. The sequence is that of Large ribosomal subunit protein uL14 from Delftia acidovorans (strain DSM 14801 / SPH-1).